A 328-amino-acid chain; its full sequence is Endochitinase (328 aa).

The N-terminal stretch at 1–26 is a signal peptide; that stretch reads MRRHKEVNFVAYLLFSLLVLVSAALA. Residues 27–68 enclose the Chitin-binding type-1 domain; that stretch reads QNCGSQGGGKACASGQCCSKFGWCGNTNDYCGSGNCQSQCPG. Cystine bridges form between C29/C44, C38/C50, C43/C57, C62/C66, C100/C162, C174/C182, and C281/C313. E144 (proton donor) is an active-site residue. The propeptide at 322–328 is removed in mature form; it reads ALLVDTL.

It belongs to the glycosyl hydrolase 19 family. Chitinase class I subfamily.

The protein resides in the vacuole. The catalysed reaction is Random endo-hydrolysis of N-acetyl-beta-D-glucosaminide (1-&gt;4)-beta-linkages in chitin and chitodextrins.. Its function is as follows. Defense against chitin-containing fungal pathogens. The chain is Endochitinase from Solanum tuberosum (Potato).